We begin with the raw amino-acid sequence, 555 residues long: Wee1-like protein kinase 2-A (555 aa).

Disordered stretches follow at residues 1–81 (MRTA…SVGA) and 149–175 (FTPE…DCRT). Polar residues predominate over residues 38 to 48 (SPVSSWRTNNC). The segment covering 68–78 (SPSSDYSPDPS) has biased composition (low complexity). Over residues 149 to 160 (FTPESYRQTHFQ) the composition is skewed to polar residues. Residues 210-480 (FLEIEKIGAG…AASLAKNSVL (271 aa)) form the Protein kinase domain. Residues 216-224 (IGAGEFGSV) and lysine 239 contribute to the ATP site. The active-site Proton acceptor is the aspartate 337. Residues asparagine 342 and aspartate 374 each contribute to the Mg(2+) site. A coiled-coil region spans residues 487 to 513 (AAQLQKQLNVEKFKTAMLERELKAAKL). Serine 549 is modified (phosphoserine).

The protein belongs to the protein kinase superfamily. Ser/Thr protein kinase family. WEE1 subfamily. As to quaternary structure, interacts with prmt5; this promotes protesomal degradation of wee2-a in the nucleus. The interaction with prmt5 is disrupted upon activation of the DNA replication checkpoint. Subject to proteasomal degradation in the nucleus. In terms of tissue distribution, detected in egg (at protein level). Oocyte-specific maternally supplied protein. Present in immature and mature oocytes and in early (pregastrula) embryos, but not in post-gastrula embryos.

It is found in the nucleus. It localises to the cytoplasm. The protein resides in the cytosol. The catalysed reaction is L-tyrosyl-[protein] + ATP = O-phospho-L-tyrosyl-[protein] + ADP + H(+). Its function is as follows. Oocyte-specific protein tyrosine kinase that phosphorylates and inhibits cdk1 and acts as a key regulator of meiosis. Required to maintain meiotic arrest in oocytes by phosphorylating cdk1 at 'Tyr-15', which inhibits cdk1 activity and prevents meiotic reentry. Negative regulator of mitosis. Involved in the mitotic DNA replication checkpoint. The chain is Wee1-like protein kinase 2-A (wee2-a) from Xenopus laevis (African clawed frog).